The sequence spans 100 residues: Probable steroid-binding protein 3 (100 aa).

Met1 is modified (N-acetylmethionine). Residues 1-82 (MEFTAEQLSQ…LTEKEINTLN (82 aa)) form the Cytochrome b5 heme-binding domain. The segment at 1–82 (MEFTAEQLSQ…LTEKEINTLN (82 aa)) is sterol-binding.

This sequence belongs to the cytochrome b5 family. MAPR subfamily.

It localises to the nucleus. The chain is Probable steroid-binding protein 3 (MP3) from Arabidopsis thaliana (Mouse-ear cress).